Reading from the N-terminus, the 307-residue chain is tRNA pseudouridine synthase B (307 aa).

Asp-41 (nucleophile) is an active-site residue.

This sequence belongs to the pseudouridine synthase TruB family. Type 1 subfamily.

The catalysed reaction is uridine(55) in tRNA = pseudouridine(55) in tRNA. Functionally, responsible for synthesis of pseudouridine from uracil-55 in the psi GC loop of transfer RNAs. The polypeptide is tRNA pseudouridine synthase B (Prochlorococcus marinus (strain MIT 9312)).